A 601-amino-acid polypeptide reads, in one-letter code: Oligoendopeptidase F homolog (601 aa).

His-387 serves as a coordination point for Zn(2+). Glu-388 is an active-site residue. Residues His-391 and His-394 each coordinate Zn(2+).

It belongs to the peptidase M3 family. Zn(2+) is required as a cofactor.

Functionally, hydrolyzes peptides containing between 7 and 17 amino acids with a rather wide specificity. In Lactococcus lactis subsp. lactis (strain IL1403) (Streptococcus lactis), this protein is Oligoendopeptidase F homolog (pepF).